A 211-amino-acid chain; its full sequence is Uracil phosphoribosyltransferase (211 aa).

5-phospho-alpha-D-ribose 1-diphosphate is bound by residues arginine 78, arginine 103, and 130-138 (DPMLATGGS). Uracil is bound by residues isoleucine 193 and 198-200 (GDA). A 5-phospho-alpha-D-ribose 1-diphosphate-binding site is contributed by aspartate 199.

This sequence belongs to the UPRTase family. Requires Mg(2+) as cofactor.

The catalysed reaction is UMP + diphosphate = 5-phospho-alpha-D-ribose 1-diphosphate + uracil. It functions in the pathway pyrimidine metabolism; UMP biosynthesis via salvage pathway; UMP from uracil: step 1/1. With respect to regulation, allosterically activated by GTP. Its function is as follows. Catalyzes the conversion of uracil and 5-phospho-alpha-D-ribose 1-diphosphate (PRPP) to UMP and diphosphate. This Hahella chejuensis (strain KCTC 2396) protein is Uracil phosphoribosyltransferase.